Reading from the N-terminus, the 229-residue chain is Uracil-DNA glycosylase (229 aa).

Residue Asp-67 is the Proton acceptor of the active site.

The protein belongs to the uracil-DNA glycosylase (UDG) superfamily. UNG family.

The protein localises to the cytoplasm. The catalysed reaction is Hydrolyzes single-stranded DNA or mismatched double-stranded DNA and polynucleotides, releasing free uracil.. Its function is as follows. Excises uracil residues from the DNA which can arise as a result of misincorporation of dUMP residues by DNA polymerase or due to deamination of cytosine. This chain is Uracil-DNA glycosylase, found in Coxiella burnetii (strain CbuK_Q154) (Coxiella burnetii (strain Q154)).